The primary structure comprises 162 residues: Probable chemoreceptor glutamine deamidase CheD 3 (162 aa).

Belongs to the CheD family.

It catalyses the reaction L-glutaminyl-[protein] + H2O = L-glutamyl-[protein] + NH4(+). In terms of biological role, probably deamidates glutamine residues to glutamate on methyl-accepting chemotaxis receptors (MCPs), playing an important role in chemotaxis. In Geobacter sulfurreducens (strain ATCC 51573 / DSM 12127 / PCA), this protein is Probable chemoreceptor glutamine deamidase CheD 3.